The primary structure comprises 116 residues: MNDRITLAQAHCQPREKKEHKLGQARLAELLPQVPGWELSNNGHALTRTFQFDNYYRTLAFVNALAFIAHCEDHHPDMNVHYGRAVVCFSTHKIGGISEIDFICAAKTSALYEQGI.

Belongs to the pterin-4-alpha-carbinolamine dehydratase family.

The catalysed reaction is (4aS,6R)-4a-hydroxy-L-erythro-5,6,7,8-tetrahydrobiopterin = (6R)-L-erythro-6,7-dihydrobiopterin + H2O. This is Putative pterin-4-alpha-carbinolamine dehydratase from Xylella fastidiosa (strain M12).